Reading from the N-terminus, the 139-residue chain is Transcription antitermination protein NusB (139 aa).

The protein belongs to the NusB family.

In terms of biological role, involved in transcription antitermination. Required for transcription of ribosomal RNA (rRNA) genes. Binds specifically to the boxA antiterminator sequence of the ribosomal RNA (rrn) operons. The polypeptide is Transcription antitermination protein NusB (Erwinia tasmaniensis (strain DSM 17950 / CFBP 7177 / CIP 109463 / NCPPB 4357 / Et1/99)).